A 763-amino-acid chain; its full sequence is Probable ubiquitin carboxyl-terminal hydrolase MINDY-4 (763 aa).

Ser-143 is modified (phosphoserine). The disordered stretch occupies residues 154 to 368 (SSKRSSHKSR…SQPASLRKNQ (215 aa)). Basic and acidic residues predominate over residues 180 to 202 (EKTDKLPMSEPSLDTKRMGEKVR). Ser-220 and Ser-224 each carry phosphoserine. Polar residues predominate over residues 252–261 (ELSTHTSTCP). Residues 267-278 (PASSTASTSRSP) are compositionally biased toward low complexity. Position 296 is a phosphoserine (Ser-296). Basic and acidic residues predominate over residues 346 to 355 (TQERPERAFE). A compositionally biased stretch (polar residues) spans 357-368 (QGSQPASLRKNQ). The active-site Nucleophile is Cys-463. Catalysis depends on His-683, which acts as the Proton acceptor.

This sequence belongs to the MINDY deubiquitinase family. FAM188 subfamily.

The catalysed reaction is Thiol-dependent hydrolysis of ester, thioester, amide, peptide and isopeptide bonds formed by the C-terminal Gly of ubiquitin (a 76-residue protein attached to proteins as an intracellular targeting signal).. Its function is as follows. Probable hydrolase that can remove 'Lys-48'-linked conjugated ubiquitin from proteins. The protein is Probable ubiquitin carboxyl-terminal hydrolase MINDY-4 (MINDY4) of Bos taurus (Bovine).